The following is a 333-amino-acid chain: tRNA-modifying protein YgfZ (333 aa).

Folate-binding residues include Trp33 and Trp195.

It belongs to the tRNA-modifying YgfZ family.

It localises to the cytoplasm. Folate-binding protein involved in regulating the level of ATP-DnaA and in the modification of some tRNAs. It is probably a key factor in regulatory networks that act via tRNA modification, such as initiation of chromosomal replication. In Pectobacterium carotovorum subsp. carotovorum (strain PC1), this protein is tRNA-modifying protein YgfZ.